Here is a 154-residue protein sequence, read N- to C-terminus: Deoxyuridine 5'-triphosphate nucleotidohydrolase (154 aa).

Substrate-binding positions include Arg64–Gly66, Asn77, Thr81–Asp83, and Lys91.

This sequence belongs to the dUTPase family. As to quaternary structure, homotrimer. It depends on Mg(2+) as a cofactor.

It carries out the reaction dUTP + H2O = dUMP + diphosphate + H(+). It participates in pyrimidine metabolism; dUMP biosynthesis; dUMP from dCTP (dUTP route): step 2/2. Its function is as follows. This enzyme is involved in nucleotide metabolism: it produces dUMP, the immediate precursor of thymidine nucleotides and it decreases the intracellular concentration of dUTP so that uracil cannot be incorporated into DNA. The sequence is that of Deoxyuridine 5'-triphosphate nucleotidohydrolase from Mycobacterium bovis (strain BCG / Pasteur 1173P2).